The chain runs to 784 residues: LPS-assembly protein LptD (784 aa).

Residues 1–24 (MKKRIPTLLATMIATALYSQQGLA) form the signal peptide. 2 disulfides stabilise this stretch: Cys-31–Cys-724 and Cys-173–Cys-725.

This sequence belongs to the LptD family. Component of the lipopolysaccharide transport and assembly complex. Interacts with LptE and LptA. In terms of processing, contains two intramolecular disulfide bonds.

It localises to the cell outer membrane. In terms of biological role, together with LptE, is involved in the assembly of lipopolysaccharide (LPS) at the surface of the outer membrane. The polypeptide is LPS-assembly protein LptD (Escherichia coli O6:K15:H31 (strain 536 / UPEC)).